The primary structure comprises 431 residues: Septin-11 (431 aa).

Ala2 is subject to N-acetylalanine. Ser9 carries the phosphoserine modification. The Septin-type G domain maps to 38 to 304; sequence QGFCFNILCV…ELYRRCKLEE (267 aa). The segment at 48–55 is G1 motif; it reads GETGIGKS. GTP-binding positions include 48–55, Gly103, 184–192, Gly238, and Arg253; these read GETGIGKS and KADTIAKNE. Residues 100–103 are G3 motif; that stretch reads DTVG. The segment at 183-186 is G4 motif; that stretch reads AKAD. Residues 320 to 413 are a coiled coil; it reads QETYEAKRNE…LLQSQAQQSG (94 aa). A disordered region spans residues 400 to 431; sequence AAAQLLQSQAQQSGAQQTKKDKDKKNPWLCTE. Positions 401 to 416 are enriched in low complexity; that stretch reads AAQLLQSQAQQSGAQQ.

Belongs to the TRAFAC class TrmE-Era-EngA-EngB-Septin-like GTPase superfamily. Septin GTPase family. In terms of assembly, septins polymerize into heterooligomeric protein complexes that form filaments, and can associate with cellular membranes, actin filaments and microtubules. Forms homooligomers. GTPase activity is required for filament formation. Interacts with SEPTIN7, SEPTIN9 and SEPTIN12. Expressed in the cerebral cortex (at protein level).

The protein resides in the cytoplasm. The protein localises to the cytoskeleton. It is found in the synapse. Its subcellular location is the cell projection. It localises to the dendritic spine. The protein resides in the axon. Filament-forming cytoskeletal GTPase. May play a role in cytokinesis (Potential). May play a role in the cytoarchitecture of neurons, including dendritic arborization and dendritic spines, and in GABAergic synaptic connectivity. The sequence is that of Septin-11 from Mus musculus (Mouse).